The chain runs to 179 residues: Large ribosomal subunit protein uL5 (179 aa).

It belongs to the universal ribosomal protein uL5 family. Part of the 50S ribosomal subunit; part of the 5S rRNA/L5/L18/L25 subcomplex. Contacts the 5S rRNA and the P site tRNA. Forms a bridge to the 30S subunit in the 70S ribosome.

In terms of biological role, this is one of the proteins that bind and probably mediate the attachment of the 5S RNA into the large ribosomal subunit, where it forms part of the central protuberance. In the 70S ribosome it contacts protein S13 of the 30S subunit (bridge B1b), connecting the 2 subunits; this bridge is implicated in subunit movement. Contacts the P site tRNA; the 5S rRNA and some of its associated proteins might help stabilize positioning of ribosome-bound tRNAs. The chain is Large ribosomal subunit protein uL5 from Clostridium beijerinckii (strain ATCC 51743 / NCIMB 8052) (Clostridium acetobutylicum).